A 91-amino-acid polypeptide reads, in one-letter code: Alpha-defensin 31 (91 aa).

Residues 1-19 form the signal peptide; that stretch reads MKKLVLLFALVLLAFQVQA. A propeptide spanning residues 20-65 is cleaved from the precursor; that stretch reads DSIQNTDEETKTEEQQGEEDQAVSVSFGDPQGSGLQDAALGWGRRC. The segment at 22–55 is disordered; that stretch reads IQNTDEETKTEEQQGEEDQAVSVSFGDPQGSGLQ. A run of 6 repeats spans residues 65–67, 68–70, 71–73, 77–79, 80–82, and 83–85. The tract at residues 65 to 85 is 6 X 3 AA tandem repeats of C-P-X; the sequence is CPRCPPCPRCSWCPRCPTCPR.

The protein belongs to the alpha-defensin family. In terms of tissue distribution, paneth cells of the small bowel.

The protein resides in the secreted. In terms of biological role, apparent precursor of a secreted, cationic, proline- and cysteine-rich peptide that contains Cys-Pro-Xaa repeats. Unlike cryptdin, the proposed mature peptide region lacks the structural motif characteristic of defensins. It may have microbicidal activities. The sequence is that of Alpha-defensin 31 from Mus musculus (Mouse).